The sequence spans 681 residues: Hydroxyproline O-galactosyltransferase GALT6 (681 aa).

Topologically, residues 1 to 28 (MRKPKLSKLERLEKFDIFVSLSKQRSVQ) are cytoplasmic. A helical; Signal-anchor for type II membrane protein transmembrane segment spans residues 29–49 (ILMAVGLLYMLLITFEIPFVF). Residues 50–681 (KTGLSSLSQD…TGKPQCCNMR (632 aa)) lie on the Lumenal side of the membrane. Positions 57 to 80 (SQDPLTRPEKHNSQRELQERRAPT) are disordered. Positions 62–78 (TRPEKHNSQRELQERRA) are enriched in basic and acidic residues. Positions 187-401 (NIMELPCGLT…DIDVHSVFAG (215 aa)) constitute a Galectin domain. Asparagine 629 carries N-linked (GlcNAc...) asparagine glycosylation.

Belongs to the glycosyltransferase 31 family. The cofactor is Mn(2+). As to expression, expressed in junveile leaves and stems, and at lower levels in cauline leaves and siliques.

The protein resides in the golgi apparatus membrane. It functions in the pathway protein modification; protein glycosylation. In terms of biological role, possesses hydroxyproline O-galactosyltransferase activity. Transfers galactose from UDP-galactose to hydroxyproline residues in the arabinogalactan proteins (AGPs). Is specific for AGPs containing non-contiguous peptidyl hydroxyproline residues. Utilizes UDP-galactose solely as sugar donor. The addition of galactose onto the peptidyl hydroxyproline residues in AGP core proteins represents the first committed step in arabinogalactan polysaccharide addition. AGP glycans play essential roles in both vegetative and reproductive plant growth. This chain is Hydroxyproline O-galactosyltransferase GALT6, found in Arabidopsis thaliana (Mouse-ear cress).